Consider the following 319-residue polypeptide: Acetyl-coenzyme A carboxylase carboxyl transferase subunit alpha (319 aa).

Positions 35–296 constitute a CoA carboxyltransferase C-terminal domain; that stretch reads NLDEEVQRLR…KAQLLADLND (262 aa).

It belongs to the AccA family. Acetyl-CoA carboxylase is a heterohexamer composed of biotin carboxyl carrier protein (AccB), biotin carboxylase (AccC) and two subunits each of ACCase subunit alpha (AccA) and ACCase subunit beta (AccD).

The protein resides in the cytoplasm. It carries out the reaction N(6)-carboxybiotinyl-L-lysyl-[protein] + acetyl-CoA = N(6)-biotinyl-L-lysyl-[protein] + malonyl-CoA. It functions in the pathway lipid metabolism; malonyl-CoA biosynthesis; malonyl-CoA from acetyl-CoA: step 1/1. Component of the acetyl coenzyme A carboxylase (ACC) complex. First, biotin carboxylase catalyzes the carboxylation of biotin on its carrier protein (BCCP) and then the CO(2) group is transferred by the carboxyltransferase to acetyl-CoA to form malonyl-CoA. The sequence is that of Acetyl-coenzyme A carboxylase carboxyl transferase subunit alpha from Yersinia pseudotuberculosis serotype O:3 (strain YPIII).